We begin with the raw amino-acid sequence, 303 residues long: Serine/threonine-protein phosphatase PP-X homolog 1 (303 aa).

Positions 51, 53, 79, and 111 each coordinate Mn(2+). His-112 (proton donor) is an active-site residue. Residues His-161 and His-235 each coordinate Mn(2+).

It belongs to the PPP phosphatase family. PP-4 (PP-X) subfamily. Mn(2+) serves as cofactor.

It catalyses the reaction O-phospho-L-seryl-[protein] + H2O = L-seryl-[protein] + phosphate. It carries out the reaction O-phospho-L-threonyl-[protein] + H2O = L-threonyl-[protein] + phosphate. The protein is Serine/threonine-protein phosphatase PP-X homolog 1 (Ppx1) of Paramecium tetraurelia.